Here is a 217-residue protein sequence, read N- to C-terminus: Protein dao-4 (217 aa).

An N-terminal signal peptide occupies residues 1–21 (MKIALYSILLITVCYLSSTDA).

It localises to the nucleus. The protein localises to the secreted. Probably acts downstream of the Wnt signaling pathway. The protein is Protein dao-4 of Caenorhabditis elegans.